The following is a 420-amino-acid chain: MSNVRYISNLTRETYALILAGGRGSRLHELTDWRAKPALYFGGKFRIIDFPLSNCINSGIRRVGVVTQYKSHSLIRHVMRGWGHFKKELGESVEILPASQRYSENWYQGTADAVFQNIDIIRHELPKYVMVLSGDHVYRMDYAGLLAAHAESGADMTVSCLEVPVAEAAGAFGVMEVDDDMRILGFEEKPQLPKHCPGNPEKCLASMGNYVFNTEFLFEQLKKDAQNAESDRDFGKDIIPSIIEKHKVFAYPFKSAFPNEQAYWRDVGTLDSFWLANMELLSPTPALNLYDAKWPIWTYQEQLPPAKFVFDDDDRRGMAVDSIISGGCIISGATVRRSVLFNEVRVCSYSVVEDSVVLPDVVVLRHCKIKNAIIDRGCIIPEGTVIGYNHDHDRAKGFRVSEKGITLVTRDMLGLPVGYE.

Residues tyrosine 107, glycine 173, 188–189, and serine 206 each bind alpha-D-glucose 1-phosphate; that span reads EK.

It belongs to the bacterial/plant glucose-1-phosphate adenylyltransferase family. As to quaternary structure, homotetramer.

The enzyme catalyses alpha-D-glucose 1-phosphate + ATP + H(+) = ADP-alpha-D-glucose + diphosphate. Its pathway is glycan biosynthesis; glycogen biosynthesis. In terms of biological role, involved in the biosynthesis of ADP-glucose, a building block required for the elongation reactions to produce glycogen. Catalyzes the reaction between ATP and alpha-D-glucose 1-phosphate (G1P) to produce pyrophosphate and ADP-Glc. The chain is Glucose-1-phosphate adenylyltransferase from Shewanella oneidensis (strain ATCC 700550 / JCM 31522 / CIP 106686 / LMG 19005 / NCIMB 14063 / MR-1).